The sequence spans 393 residues: 1-deoxy-D-xylulose 5-phosphate reductoisomerase (393 aa).

Positions 13, 14, 15, 16, and 128 each coordinate NADPH. Residue Lys129 participates in 1-deoxy-D-xylulose 5-phosphate binding. Position 130 (Glu130) interacts with NADPH. A Mn(2+)-binding site is contributed by Asp154. 1-deoxy-D-xylulose 5-phosphate-binding residues include Ser155, Glu156, Ser178, and His201. A Mn(2+)-binding site is contributed by Glu156. Gly207 provides a ligand contact to NADPH. 1-deoxy-D-xylulose 5-phosphate contacts are provided by Ser214, Asn219, Lys220, and Glu223. Glu223 contributes to the Mn(2+) binding site.

The protein belongs to the DXR family. Mg(2+) serves as cofactor. Mn(2+) is required as a cofactor.

The catalysed reaction is 2-C-methyl-D-erythritol 4-phosphate + NADP(+) = 1-deoxy-D-xylulose 5-phosphate + NADPH + H(+). It functions in the pathway isoprenoid biosynthesis; isopentenyl diphosphate biosynthesis via DXP pathway; isopentenyl diphosphate from 1-deoxy-D-xylulose 5-phosphate: step 1/6. In terms of biological role, catalyzes the NADPH-dependent rearrangement and reduction of 1-deoxy-D-xylulose-5-phosphate (DXP) to 2-C-methyl-D-erythritol 4-phosphate (MEP). The chain is 1-deoxy-D-xylulose 5-phosphate reductoisomerase from Acidithiobacillus ferrooxidans (strain ATCC 23270 / DSM 14882 / CIP 104768 / NCIMB 8455) (Ferrobacillus ferrooxidans (strain ATCC 23270)).